Here is a 388-residue protein sequence, read N- to C-terminus: Methylthioribose-1-phosphate isomerase (388 aa).

The active-site Proton donor is the aspartate 252.

Belongs to the eIF-2B alpha/beta/delta subunits family. MtnA subfamily.

It localises to the cytoplasm. It is found in the nucleus. It catalyses the reaction 5-(methylsulfanyl)-alpha-D-ribose 1-phosphate = 5-(methylsulfanyl)-D-ribulose 1-phosphate. Its pathway is amino-acid biosynthesis; L-methionine biosynthesis via salvage pathway; L-methionine from S-methyl-5-thio-alpha-D-ribose 1-phosphate: step 1/6. Functionally, catalyzes the interconversion of methylthioribose-1-phosphate (MTR-1-P) into methylthioribulose-1-phosphate (MTRu-1-P). The polypeptide is Methylthioribose-1-phosphate isomerase (Verticillium alfalfae (strain VaMs.102 / ATCC MYA-4576 / FGSC 10136) (Verticillium wilt of alfalfa)).